A 424-amino-acid polypeptide reads, in one-letter code: Galacturonokinase (424 aa).

An N-acetylserine modification is found at Ser-2. Position 146–155 (146–155 (DSSGLSSSAA)) interacts with ATP. Asp-197 serves as the catalytic Proton acceptor.

It belongs to the GHMP kinase family. Mg(2+) is required as a cofactor. It depends on Mn(2+) as a cofactor. Ca(2+) serves as cofactor. In terms of tissue distribution, expressed in roots, stems, leaves, flowers and young siliques. Higher expression in the elongating middle stem region than in the lower or upper stem region.

It carries out the reaction D-galacturonate + ATP = 1-phospho-alpha-D-galacturonate + ADP + H(+). Its activity is regulated as follows. Inhibited by EDTA and ADP. Its function is as follows. Sugar-1-kinase with a strict substrate specificity for the alpha-anomeric configuration of D-galacturonic acid (D-GalA) and ATP. Involved in the biosynthesis of UDP-galacturonic acid (UDP-GalA) from the salvaged GalA that is released during growth-dependent cell wall restructuring. This Arabidopsis thaliana (Mouse-ear cress) protein is Galacturonokinase (GALAK).